The chain runs to 238 residues: 2-C-methyl-D-erythritol 4-phosphate cytidylyltransferase (238 aa).

This sequence belongs to the IspD/TarI cytidylyltransferase family. IspD subfamily.

The catalysed reaction is 2-C-methyl-D-erythritol 4-phosphate + CTP + H(+) = 4-CDP-2-C-methyl-D-erythritol + diphosphate. It functions in the pathway isoprenoid biosynthesis; isopentenyl diphosphate biosynthesis via DXP pathway; isopentenyl diphosphate from 1-deoxy-D-xylulose 5-phosphate: step 2/6. In terms of biological role, catalyzes the formation of 4-diphosphocytidyl-2-C-methyl-D-erythritol from CTP and 2-C-methyl-D-erythritol 4-phosphate (MEP). The chain is 2-C-methyl-D-erythritol 4-phosphate cytidylyltransferase from Alteromonas mediterranea (strain DSM 17117 / CIP 110805 / LMG 28347 / Deep ecotype).